A 402-amino-acid chain; its full sequence is CMP-sialic acid transporter 3 (402 aa).

Residues 1 to 42 (MSGEVECRVCHAKVQVPMAAAAVSKAYDIHRSSVSSRQRALN) are Cytoplasmic-facing. Residues 43-63 (VLLVSGDCVLAGLQPILVYMC) traverse the membrane as a helical segment. Residues 64–73 (KVDGKFKFSP) lie on the Lumenal side of the membrane. The helical transmembrane segment at 74–94 (VSVNFLTEITKIIFAIIMLCI) threads the bilayer. Topologically, residues 95–118 (QARRLKVGEKPFLTVSTFMQAARN) are cytoplasmic. Residues 119–139 (NVLLAVPALFYAINNYMKFVM) form a helical membrane-spanning segment. The Lumenal portion of the chain corresponds to 140–146 (QLYFNPA). The chain crosses the membrane as a helical span at residues 147 to 167 (TVKMLGNLKVLVIAVLLKVIM). Topologically, residues 168-170 (RRR) are cytoplasmic. Residues 171 to 191 (FSTIQWEALALLLIGISVNQL) form a helical membrane-spanning segment. Over 192–202 (KSLPEGSSTLG) the chain is Lumenal. A helical membrane pass occupies residues 203 to 223 (LPVAAGAYLYTLFFVTVPALA). Residues 224 to 243 (SVYNEKALKSQFDTSIYLQN) are Cytoplasmic-facing. The helical transmembrane segment at 244–264 (LFLYGYGAIFNFLGLVITAII) threads the bilayer. The Lumenal portion of the chain corresponds to 265 to 280 (QGPSSFNILEGHSKAT). Residues 281 to 301 (MFLICNNAAQGILSSFFFKYA) form a helical membrane-spanning segment. Residues 302 to 321 (DTILKKYSSTIATIFTGVAS) lie on the Cytoplasmic side of the membrane. The helical transmembrane segment at 322-342 (AVLFGHTLTINFVLAISIVII) threads the bilayer. Topologically, residues 343 to 402 (SMHQYLSNQIKDEVPSSKIEMGDAHEHRSKESVVVNVSDSIATEAKHRHGTDERQPLLPV) are lumenal.

The protein belongs to the nucleotide-sugar transporter family. CMP-Sialate:CMP antiporter (TC 2.A.7.12) subfamily.

It is found in the golgi apparatus membrane. Sugar transporter involved in the transport of CMP-sialic acid from the cytoplasm into the Golgi. May transport important nucleotide sugars such as CMP-Kdo (2-keto-3-deoxy-D-manno-octulosonic acid) in physiological conditions. The polypeptide is CMP-sialic acid transporter 3 (Oryza sativa subsp. indica (Rice)).